We begin with the raw amino-acid sequence, 273 residues long: Elongation factor Ts (273 aa).

Residues 80–83 (TDFV) are involved in Mg(2+) ion dislocation from EF-Tu.

It belongs to the EF-Ts family.

It localises to the cytoplasm. Functionally, associates with the EF-Tu.GDP complex and induces the exchange of GDP to GTP. It remains bound to the aminoacyl-tRNA.EF-Tu.GTP complex up to the GTP hydrolysis stage on the ribosome. The chain is Elongation factor Ts from Tropheryma whipplei (strain Twist) (Whipple's bacillus).